The primary structure comprises 330 residues: Putative acetyltransferase ORF330 (330 aa).

The next 10 membrane-spanning stretches (helical) occupy residues 29 to 49, 50 to 70, 90 to 110, 118 to 138, 163 to 183, 190 to 210, 225 to 245, 252 to 272, 273 to 293, and 297 to 317; these read GFAS…LPLS, IFRP…FLLL, IYPL…YYFH, LFLH…SYVF, FLLA…IVTL, LLYF…IAYI, ISFL…NEFL, VVVY…PPKV, LSKV…WHLL, and LLGV…EFPL.

It is found in the host membrane. This is Putative acetyltransferase ORF330 from Acidianus convivator (ATV).